The sequence spans 33 residues: Imperacalcin (33 aa).

3 disulfides stabilise this stretch: cysteine 3/cysteine 17, cysteine 10/cysteine 21, and cysteine 16/cysteine 32. Important for stimulation of [3H]ryanodine binding to RYR1 regions lie at residues 8–9 and 19–20; these read KR and KK. Residues 22 to 24 form an essential for stimulation of [3H]ryanodine binding to RYR1 region; that stretch reads KRR. The interval 25-27 is important for stimulation of [3H]ryanodine binding to RYR1; sequence GTN.

The protein belongs to the scorpion calcin family. In terms of tissue distribution, expressed by the venom gland.

The protein resides in the secreted. In terms of biological role, this toxin affects the activity of ryanodine receptors 1, 2 and 3 (RyR1, RyR2 and RyR3). At lower concentrations the toxin increases full openings of the RyRs, and at higher concentrations it inhibits full openings and induces openings to subconductance levels (30% of the full conductance state) and reduces the number of full conductance openings. The different actions may be attributed to the toxins binding at different sites on the RyRs, with binding at a high-affinity site mediating the increase in full openings and the induction of subconductance states evoked upon binding to a lower-affinity site. Furthermore, it triggers calcium release from sarcoplasmic vesicles (11.7 nM are enough to induce a sharp release, and 70% of the total calcium is released after toxin (100 nM) addition) probably by acting as a cell-penetrating peptide (CPP). In addition, it has been shown to dose-dependently stimulate ryanodine binding to RyR1 (EC(50)=8.7 nM). It also augments the bell-shaped calcium-[3H]ryanodine binding curve that is maximal at about 10 uM calcium concentration. It binds a different site as ryanodine. It acts synergistically with caffeine. In vivo, intracerebroventricular injection into mice induces neurotoxic symptoms, followed by death. This is Imperacalcin from Pandinus imperator (Emperor scorpion).